We begin with the raw amino-acid sequence, 584 residues long: Adenine deaminase (584 aa).

Belongs to the metallo-dependent hydrolases superfamily. Adenine deaminase family. Requires Mn(2+) as cofactor.

It catalyses the reaction adenine + H2O + H(+) = hypoxanthine + NH4(+). In Methanococcoides burtonii (strain DSM 6242 / NBRC 107633 / OCM 468 / ACE-M), this protein is Adenine deaminase.